The primary structure comprises 495 residues: Chromosomal replication initiator protein DnaA (495 aa).

The interval 1–91 (MTADPDPPFV…ITALSRHLGQ (91 aa)) is domain I, interacts with DnaA modulators. The tract at residues 91–154 (QRVELGVRIA…TPAAEDPNAV (64 aa)) is domain II. Residues 155-371 (SLNRRYTFDT…GALIRVTAFA (217 aa)) are domain III, AAA+ region. ATP is bound by residues Gly-199, Gly-201, Lys-202, and Thr-203. Residues 372 to 495 (SLNKTPIDKS…TTRIRQRAKR (124 aa)) form a domain IV, binds dsDNA region.

It belongs to the DnaA family. As to quaternary structure, oligomerizes as a right-handed, spiral filament on DNA at oriC.

Its subcellular location is the cytoplasm. Functionally, plays an essential role in the initiation and regulation of chromosomal replication. ATP-DnaA binds to the origin of replication (oriC) to initiate formation of the DNA replication initiation complex once per cell cycle. Binds the DnaA box (a 9 base pair repeat at the origin) and separates the double-stranded (ds)DNA. Forms a right-handed helical filament on oriC DNA; dsDNA binds to the exterior of the filament while single-stranded (ss)DNA is stabiized in the filament's interior. The ATP-DnaA-oriC complex binds and stabilizes one strand of the AT-rich DNA unwinding element (DUE), permitting loading of DNA polymerase. After initiation quickly degrades to an ADP-DnaA complex that is not apt for DNA replication. Binds acidic phospholipids. The chain is Chromosomal replication initiator protein DnaA from Mycobacterium sp. (strain JLS).